The chain runs to 120 residues: Ribonuclease P protein component (120 aa).

The protein belongs to the RnpA family. Consists of a catalytic RNA component (M1 or rnpB) and a protein subunit.

The enzyme catalyses Endonucleolytic cleavage of RNA, removing 5'-extranucleotides from tRNA precursor.. Functionally, RNaseP catalyzes the removal of the 5'-leader sequence from pre-tRNA to produce the mature 5'-terminus. It can also cleave other RNA substrates such as 4.5S RNA. The protein component plays an auxiliary but essential role in vivo by binding to the 5'-leader sequence and broadening the substrate specificity of the ribozyme. This is Ribonuclease P protein component from Chlamydia trachomatis serovar D (strain ATCC VR-885 / DSM 19411 / UW-3/Cx).